Reading from the N-terminus, the 1400-residue chain is MNQEVMNLFNPQAPAQTFDSIRISIASPEKILSWSYGEIKKPETINYRTFKPERDGLFCARIFGPIKDYECLCGKYKRMKYKGIICEKCGVEVTLSRVRRERMGHIELAAPVAHIWFLKSLPSRIGTLLDMTLKDIERVLYFENYIVTEPGLTSLKEHQLLSEEEYMIAVDEFGEDQFTALIGAEAIYELLASMELEKIAADLRVDLAETTSDLKQKKLMKRLKIVENFLESGNRPEWMIMKIVPVIPPDLRPLVPLDGGRFATSDLNDLYRRVINRNNRLKRLIELRAPGIIIRNEKRMLQEAVDALFDNGRRGRVITGANKRPLKSLSDMLKGKQGRFRQNLLGKRVDYSGRSVIVTGPELKLHQCGLPKKMALELFKPFIYARLDAKGYSSTVKQAKKLVEKERPEVWDILDEVIREHPVLLNRAPTLHRLGIQAFEPTLIEGKAIQLHPLVCTAFNADFDGDQMAVHVPLSLEAQLEARVLMMSTNNILHPANGAPIIVPSQDMVLGLYYLSIVAEKEPGEGMIFADMGELQHALENKVVTLHTKIKGRFKTVDAEGNPVSKIYDTTPGRMIMGELLPKNVNVPFDICNQEMTKKNISKMIDHVYRHCGQKETVIFCDRIMQLGFAHACRAGISFGKDDMVIPESKAKIVAETEALTTEYEQQYNDGLITQGEKYNKVVDAWGKATDKITEEMMARLKAVEFDPVTGRQKQMNSVYMMSHSGARGSVNQMRQLGGMRGLMAKPSGEIIETPIISNFKEGLTVNEYFNSTHGARKGLADTALKTANSGYLTRRLVDVAQDAIISEVDCGAEIGLTMQPIVDAGQIVASIGQRVLGRTALDPILHPVTGEVIVEAGRMIEEKDVEIIEKAGIQSIRIRSALTCETRNGVCAKCYGRDLARGTPVNQGEAVGVIAAQSIGEPGTQLTMRTFHLGGTAQVVDSSYLEASYEGTVKLRNRNVVRNSDGNLVVMGRNMAVLILDATGKERAVHRVTYGSRLFVDEGDTVKRGQRIAEWDPYTRPIMTEVEGYVEFEDLVDGLSVSETADESTGITKRVVIDWRSTPRGSDLKPAMVIKDKAGKILKLSKGGDARFLLSVESILSVEPGAHVKAGDVIARLPMESAKTKDITGGLPRVAELFEARRPKDHAIIAEIDGTVRFGRDYKNKRRIIIEPNDDTIEPVEYLIPKGKPFHLQDGDVIEKGEYILDGNPAPHDILAIKGVEALASYLVNEIQEVYRLQGVLINDKHIEVIVRQMLQKVEITESGDTGYIPGDHVDRIELEEINERLIEEGKKPGSGNPVLLGITKASLQTPSFISAASFQETTRVLTEAAVAGKMDTLQGLKENVIVGRLIPAGTGGMTNQIRRIATARDELIIDERRKTSGSAEANAMLVDMTNNAAE.

Residues C71, C73, C86, and C89 each coordinate Zn(2+). Mg(2+) contacts are provided by D462, D464, and D466. Residues C811, C885, C892, and C895 each contribute to the Zn(2+) site.

It belongs to the RNA polymerase beta' chain family. In terms of assembly, the RNAP catalytic core consists of 2 alpha, 1 beta, 1 beta' and 1 omega subunit. When a sigma factor is associated with the core the holoenzyme is formed, which can initiate transcription. It depends on Mg(2+) as a cofactor. Zn(2+) is required as a cofactor.

The enzyme catalyses RNA(n) + a ribonucleoside 5'-triphosphate = RNA(n+1) + diphosphate. Its function is as follows. DNA-dependent RNA polymerase catalyzes the transcription of DNA into RNA using the four ribonucleoside triphosphates as substrates. This chain is DNA-directed RNA polymerase subunit beta', found in Brucella ovis (strain ATCC 25840 / 63/290 / NCTC 10512).